Here is a 94-residue protein sequence, read N- to C-terminus: MTISLKDVEHVAMLARLKLSDEEKEMYTKQLNDILKYAEQLQELDTENVKPTAHVLPIKNVFREDKVHQHLDPEKALANAPEREENFFKVPKII.

The protein belongs to the GatC family. In terms of assembly, heterotrimer of A, B and C subunits.

It carries out the reaction L-glutamyl-tRNA(Gln) + L-glutamine + ATP + H2O = L-glutaminyl-tRNA(Gln) + L-glutamate + ADP + phosphate + H(+). The enzyme catalyses L-aspartyl-tRNA(Asn) + L-glutamine + ATP + H2O = L-asparaginyl-tRNA(Asn) + L-glutamate + ADP + phosphate + 2 H(+). In terms of biological role, allows the formation of correctly charged Asn-tRNA(Asn) or Gln-tRNA(Gln) through the transamidation of misacylated Asp-tRNA(Asn) or Glu-tRNA(Gln) in organisms which lack either or both of asparaginyl-tRNA or glutaminyl-tRNA synthetases. The reaction takes place in the presence of glutamine and ATP through an activated phospho-Asp-tRNA(Asn) or phospho-Glu-tRNA(Gln). This is Aspartyl/glutamyl-tRNA(Asn/Gln) amidotransferase subunit C from Carboxydothermus hydrogenoformans (strain ATCC BAA-161 / DSM 6008 / Z-2901).